The chain runs to 413 residues: Histidine--tRNA ligase (413 aa).

It belongs to the class-II aminoacyl-tRNA synthetase family. In terms of assembly, homodimer.

The protein localises to the cytoplasm. The catalysed reaction is tRNA(His) + L-histidine + ATP = L-histidyl-tRNA(His) + AMP + diphosphate + H(+). The protein is Histidine--tRNA ligase of Ehrlichia canis (strain Jake).